Here is a 296-residue protein sequence, read N- to C-terminus: N-acetylmuramic acid 6-phosphate etherase 2 (296 aa).

One can recognise an SIS domain in the interval 55-218 (IIKSFNQGGR…STISMIGIGK (164 aa)). Glutamate 83 functions as the Proton donor in the catalytic mechanism. The active site involves glutamate 114.

The protein belongs to the GCKR-like family. MurNAc-6-P etherase subfamily. Homodimer.

The catalysed reaction is N-acetyl-D-muramate 6-phosphate + H2O = N-acetyl-D-glucosamine 6-phosphate + (R)-lactate. The protein operates within amino-sugar metabolism; N-acetylmuramate degradation. Specifically catalyzes the cleavage of the D-lactyl ether substituent of MurNAc 6-phosphate, producing GlcNAc 6-phosphate and D-lactate. This chain is N-acetylmuramic acid 6-phosphate etherase 2, found in Enterococcus faecalis (strain ATCC 700802 / V583).